The chain runs to 282 residues: Glycine betaine transport system permease protein OpuAB (282 aa).

The Extracellular segment spans residues 1 to 18; it reads MDRLPRIPLADIIDRFVD. Residues 19-39 form a helical membrane-spanning segment; that stretch reads WITMTFGGFFDGIANGLAAFV. At 40-44 the chain is on the cytoplasmic side; it reads NGIVT. The chain crosses the membrane as a helical span at residues 45 to 65; it reads GLGFIPSILLTIIFAALAWWI. Over 66–69 the chain is Extracellular; sequence STRG. Residues 70–90 traverse the membrane as a helical segment; the sequence is IALFTLIGFLLIDYLGYWDPM. Residues 90 to 269 enclose the ABC transmembrane type-1 domain; it reads MLQTLALVLT…IVAITLDRIT (180 aa). The Cytoplasmic segment spans residues 91–93; it reads LQT. The helical transmembrane segment at 94 to 114 threads the bilayer; sequence LALVLTSVIISIVVGVPIGIW. The Extracellular segment spans residues 115–137; the sequence is ASQKETVRRIVTPILDLMQTMPA. The chain crosses the membrane as a helical span at residues 138–158; it reads FVYLLPAIFFFNIGVVPGVVA. The Cytoplasmic portion of the chain corresponds to 159 to 215; it reads SVIFAMPPTIRMTVLGIKQVPADLIEATEAFGSTTAQRLFKVQLPLATKTILAGINQ. Residues 216 to 236 form a helical membrane-spanning segment; that stretch reads SIMLALSMVVIAAMVGAPGLG. At 237-242 the chain is on the extracellular side; that stretch reads SEVYSA. Residues 243-263 traverse the membrane as a helical segment; sequence VTQLKTGVGVEAGIAIVIVAI. The Cytoplasmic segment spans residues 264–282; the sequence is TLDRITQNIKVKKKSRGNA.

This sequence belongs to the binding-protein-dependent transport system permease family. CysTW subfamily. The complex is composed of two ATP-binding proteins (OpuAA), two transmembrane proteins (OpuAB) and a solute-binding protein (OpuAC).

The protein resides in the cell membrane. In terms of biological role, involved in a multicomponent binding-protein-dependent transport system for glycine betaine; probably responsible for the translocation of the substrate across the membrane. In Bacillus subtilis (strain 168), this protein is Glycine betaine transport system permease protein OpuAB (opuAB).